The following is a 685-amino-acid chain: ATP-dependent RNA helicase MSS116, mitochondrial (685 aa).

The N-terminal 34 residues, Met-1–Asn-34, are a transit peptide targeting the mitochondrion. Positions Ser-42–Asp-107 are disordered. The segment covering Ser-58–Ser-69 has biased composition (low complexity). Residues Ser-70–Asn-86 show a composition bias toward basic and acidic residues. Residues Arg-88–Asn-99 show a composition bias toward low complexity. The Q motif motif lies at Ser-138–Gln-166. The 188-residue stretch at Lys-170–Leu-357 folds into the Helicase ATP-binding domain. Ala-183–Thr-190 contributes to the ATP binding site. Residues Asp-298–Asp-301 carry the DEAD box motif. In terms of domain architecture, Helicase C-terminal spans Ser-386–Asn-542. The tract at residues Asp-633–Asp-685 is disordered. The segment covering Ser-644 to Ser-658 has biased composition (low complexity).

The protein belongs to the DEAD box helicase family. DDX18/HAS1 subfamily.

Its subcellular location is the mitochondrion matrix. The catalysed reaction is ATP + H2O = ADP + phosphate + H(+). ATP-dependent RNA helicase required for mitochondrial splicing of group I and II introns. Also required for efficient mitochondrial translation. This chain is ATP-dependent RNA helicase MSS116, mitochondrial (MSS116), found in Kluyveromyces lactis (strain ATCC 8585 / CBS 2359 / DSM 70799 / NBRC 1267 / NRRL Y-1140 / WM37) (Yeast).